The sequence spans 591 residues: Probable methyltransferase PMT6 (591 aa).

Over 1–13 the chain is Cytoplasmic; that stretch reads MRGSVIGAERSGQ. The chain crosses the membrane as a helical; Signal-anchor for type II membrane protein span at residues 14 to 34; sequence TIMVALVLMVGSFYTGSLFGT. Residues 35–591 lie on the Lumenal side of the membrane; the sequence is NQPIYVSHPS…FCRKRFWAII (557 aa). 8 N-linked (GlcNAc...) asparagine glycosylation sites follow: N87, N99, N146, N193, N323, N436, N473, and N515.

The protein belongs to the methyltransferase superfamily.

It is found in the endoplasmic reticulum membrane. The sequence is that of Probable methyltransferase PMT6 from Arabidopsis thaliana (Mouse-ear cress).